The chain runs to 381 residues: rRNA adenine N-6-methyltransferase (381 aa).

The span at Met-1–His-19 shows a compositional bias: basic and acidic residues. Positions Met-1–Asn-42 are disordered. S-adenosyl-L-methionine-binding residues include Asn-42, Leu-44, Gly-69, Glu-90, Asp-115, and Ala-131. The disordered stretch occupies residues Arg-282–Arg-381. Residues Gly-301 to Gly-358 show a composition bias toward basic and acidic residues. A compositionally biased stretch (gly residues) spans Arg-359–Arg-381.

The protein belongs to the class I-like SAM-binding methyltransferase superfamily. rRNA adenine N(6)-methyltransferase family.

The enzyme catalyses adenosine(2085) in 23S rRNA + 2 S-adenosyl-L-methionine = N(6)-dimethyladenosine(2085) in 23S rRNA + 2 S-adenosyl-L-homocysteine + 2 H(+). In terms of biological role, this protein produces a dimethylation of the adenine residue at position 2085 in 23S rRNA, resulting in reduced affinity between ribosomes and macrolide-lincosamide-streptogramin B antibiotics. The chain is rRNA adenine N-6-methyltransferase (ermE) from Saccharopolyspora erythraea (strain ATCC 11635 / DSM 40517 / JCM 4748 / NBRC 13426 / NCIMB 8594 / NRRL 2338).